The following is a 419-amino-acid chain: Chalcone synthase D (419 aa).

Residue Cys-164 is part of the active site.

It belongs to the thiolase-like superfamily. Chalcone/stilbene synthases family.

It catalyses the reaction (E)-4-coumaroyl-CoA + 3 malonyl-CoA + 3 H(+) = 2',4,4',6'-tetrahydroxychalcone + 3 CO2 + 4 CoA. It functions in the pathway secondary metabolite biosynthesis; flavonoid biosynthesis. Functionally, the primary product of this enzyme is 4,2',4',6'-tetrahydroxychalcone (also termed naringenin-chalcone or chalcone) which can under specific conditions spontaneously isomerize into naringenin. The protein is Chalcone synthase D (CHSD) of Petunia hybrida (Petunia).